The primary structure comprises 286 residues: MKIKVLKTIAEVRRYIAEERRLGFSIGFVPTMGALHEGHLALVWRARAICDRILVSIFVNPKQFGPHEDFDKYPRDLMADCALLEKAGVEYVFAPSVEEMWPPGNETIVKVEKLSRILIGKLRPGHFCGVTSVVAKLFNIVQPDKAFFGEKDFQQILIVRRMVEDLAFPIEIVGVPILREADGVASSSRNQFLTLEERKAAKIIPESGKAAEKLYRQGERSVDKLCKIVRDILQQESRAIIEKIDLRDMETLSVVKGKLNKPAVLLLTVRFGKVRLIDQYILQEKD.

Position 32-39 (32-39 (MGALHEGH)) interacts with ATP. His-39 functions as the Proton donor in the catalytic mechanism. Gln-63 serves as a coordination point for (R)-pantoate. Residue Gln-63 coordinates beta-alanine. 149-152 (GEKD) is a binding site for ATP. Gln-155 contributes to the (R)-pantoate binding site. ATP contacts are provided by residues Leu-178 and 186–189 (SSSR).

The protein belongs to the pantothenate synthetase family. Homodimer.

The protein resides in the cytoplasm. The catalysed reaction is (R)-pantoate + beta-alanine + ATP = (R)-pantothenate + AMP + diphosphate + H(+). The protein operates within cofactor biosynthesis; (R)-pantothenate biosynthesis; (R)-pantothenate from (R)-pantoate and beta-alanine: step 1/1. Catalyzes the condensation of pantoate with beta-alanine in an ATP-dependent reaction via a pantoyl-adenylate intermediate. The protein is Pantothenate synthetase of Bartonella quintana (strain Toulouse) (Rochalimaea quintana).